The following is a 138-amino-acid chain: Large-conductance mechanosensitive channel (138 aa).

A run of 3 helical transmembrane segments spans residues 15 to 35 (VDLA…NSVV), 38 to 58 (IFMP…MFIQ), and 80 to 100 (GNFI…FFLV).

Belongs to the MscL family. In terms of assembly, homopentamer.

Its subcellular location is the cell inner membrane. In terms of biological role, channel that opens in response to stretch forces in the membrane lipid bilayer. May participate in the regulation of osmotic pressure changes within the cell. This is Large-conductance mechanosensitive channel from Bartonella bacilliformis (strain ATCC 35685 / KC583 / Herrer 020/F12,63).